A 312-amino-acid chain; its full sequence is Coiled-coil domain-containing protein 42 homolog (312 aa).

Coiled coils occupy residues 34–121 and 172–233; these read RLLE…RLKE and ATHQ…WESQ.

Belongs to the CFAP73 family.

In Nematostella vectensis (Starlet sea anemone), this protein is Coiled-coil domain-containing protein 42 homolog.